Reading from the N-terminus, the 205-residue chain is TATA-box-binding protein (205 aa).

A run of 2 repeats spans residues 27–103 (LQNI…ARII) and 117–194 (IQNI…YPVL).

This sequence belongs to the TBP family. As to quaternary structure, belongs to the TFIID complex together with the TBP-associated factors (TAFs). Binds DNA as monomer.

Its subcellular location is the nucleus. In terms of biological role, general transcription factor that functions at the core of the DNA-binding multiprotein factor TFIID. Binding of TFIID to the TATA box is the initial transcriptional step of the pre-initiation complex (PIC), playing a role in the activation of eukaryotic genes transcribed by RNA polymerase II. This is TATA-box-binding protein (tbpA) from Dictyostelium discoideum (Social amoeba).